The chain runs to 900 residues: DNA mismatch repair protein MutS (900 aa).

Residue 637 to 644 (GPNMAGKS) coordinates ATP.

It belongs to the DNA mismatch repair MutS family.

Functionally, this protein is involved in the repair of mismatches in DNA. It is possible that it carries out the mismatch recognition step. This protein has a weak ATPase activity. This Methanosarcina barkeri (strain Fusaro / DSM 804) protein is DNA mismatch repair protein MutS.